We begin with the raw amino-acid sequence, 510 residues long: Light-independent protochlorophyllide reductase subunit B (510 aa).

Aspartate 36 contributes to the [4Fe-4S] cluster binding site. Aspartate 296 serves as the catalytic Proton donor. 431 to 432 (GM) contributes to the substrate binding site.

It belongs to the ChlB/BchB/BchZ family. In terms of assembly, protochlorophyllide reductase is composed of three subunits; ChlL, ChlN and ChlB. Forms a heterotetramer of two ChlB and two ChlN subunits. Requires [4Fe-4S] cluster as cofactor.

The protein localises to the plastid. It is found in the chloroplast. It carries out the reaction chlorophyllide a + oxidized 2[4Fe-4S]-[ferredoxin] + 2 ADP + 2 phosphate = protochlorophyllide a + reduced 2[4Fe-4S]-[ferredoxin] + 2 ATP + 2 H2O. The protein operates within porphyrin-containing compound metabolism; chlorophyll biosynthesis (light-independent). In terms of biological role, component of the dark-operative protochlorophyllide reductase (DPOR) that uses Mg-ATP and reduced ferredoxin to reduce ring D of protochlorophyllide (Pchlide) to form chlorophyllide a (Chlide). This reaction is light-independent. The NB-protein (ChlN-ChlB) is the catalytic component of the complex. This Angiopteris evecta (Mule's foot fern) protein is Light-independent protochlorophyllide reductase subunit B.